A 334-amino-acid chain; its full sequence is Deoxyhypusine synthase (334 aa).

Residues 73–77, 99–101, Glu105, and Asp207 contribute to the NAD(+) site; these read SNIIS and TGG. 104–105 serves as a coordination point for spermidine; it reads EE. Spermidine-binding residues include Asp212 and His256. 276–277 is an NAD(+) binding site; that stretch reads NA. Residues 282–284 and 291–297 contribute to the spermidine site; these read GSD and EAVSWGK. Lys297 acts as the Nucleophile in catalysis. Position 310 to 311 (310 to 311) interacts with NAD(+); it reads DA.

It belongs to the deoxyhypusine synthase family. It depends on NAD(+) as a cofactor.

It catalyses the reaction [eIF5A protein]-L-lysine + spermidine = [eIF5A protein]-deoxyhypusine + propane-1,3-diamine. The protein operates within protein modification; eIF5A hypusination. In terms of biological role, catalyzes the NAD-dependent oxidative cleavage of spermidine and the subsequent transfer of the butylamine moiety of spermidine to the epsilon-amino group of a specific lysine residue of the eIF-5A precursor protein to form the intermediate deoxyhypusine residue. The protein is Deoxyhypusine synthase (DYS1) of Encephalitozoon cuniculi (strain GB-M1) (Microsporidian parasite).